The primary structure comprises 233 residues: Small ribosomal subunit protein uS3 (233 aa).

The KH type-2 domain occupies 39 to 107 (IRTFLKRKLY…EVNINIKEER (69 aa)). Residues 211–233 (GVQPEKTEESAPAKKPRRARRGK) form a disordered region. Basic and acidic residues predominate over residues 213 to 222 (QPEKTEESAP). Basic residues predominate over residues 224-233 (KKPRRARRGK).

Belongs to the universal ribosomal protein uS3 family. As to quaternary structure, part of the 30S ribosomal subunit. Forms a tight complex with proteins S10 and S14.

In terms of biological role, binds the lower part of the 30S subunit head. Binds mRNA in the 70S ribosome, positioning it for translation. This is Small ribosomal subunit protein uS3 from Campylobacter lari (strain RM2100 / D67 / ATCC BAA-1060).